A 3814-amino-acid polypeptide reads, in one-letter code: Hybrid PKS-NRPS synthetase pyvA (3814 aa).

In terms of domain architecture, Ketosynthase family 3 (KS3) spans 1–340 (MDPQQRLLLE…GSNAHVILES (340 aa)). Catalysis depends on for beta-ketoacyl synthase activity residues Cys-87, His-222, and His-261. The segment at 441–758 (VFTGQGAQWH…PYFASLSRGV (318 aa)) is malonyl-CoA:ACP transacylase (MAT) domain. Ser-533 (for malonyltransferase activity) is an active-site residue. The N-terminal hotdog fold stretch occupies residues 835–970 (HPILGAKMPG…GLISISTATT (136 aa)). Residues 835–1149 (HPILGAKMPG…LRLTSLSNGR (315 aa)) are dehydratase (DH) domain. In terms of domain architecture, PKS/mFAS DH spans 835-1151 (HPILGAKMPG…LTSLSNGRAA (317 aa)). The active-site Proton acceptor; for dehydratase activity is His-867. A disordered region spans residues 970–993 (TADGAPSRKPYRQHPQPQPGRMST). Positions 991-1151 (MSTASFPAQS…LTSLSNGRAA (161 aa)) are C-terminal hotdog fold. Asp-1057 (proton donor; for dehydratase activity) is an active-site residue. The tract at residues 1520-1836 (GLLETLVWED…MGRHTGKVVL (317 aa)) is enoyl reductase (ER) domain. The interval 1864-2036 (TYLLVGGLGG…PASSMNCGRI (173 aa)) is ketoreductase (KR) domain. Residues 2141–2220 (IDLSDRVALL…ALVEKAIGLF (80 aa)) form the Carrier 1 domain. Ser-2180 carries the O-(pantetheine 4'-phosphoryl)serine modification. A compositionally biased stretch (low complexity) spans 2228–2238 (QQQQQSVQSSS). The interval 2228–2270 (QQQQQSVQSSSAPSNDDQSPTFNKNLDSQDPSTSLQIPKADCS) is disordered. The span at 2239–2263 (APSNDDQSPTFNKNLDSQDPSTSLQ) shows a compositional bias: polar residues. The interval 2273–2718 (LPMSTFQNRL…PEVRLAGTLE (446 aa)) is condensation (C) domain 7. The interval 2738 to 3149 (PLNLPRRIVE…DGQLEFLGRI (412 aa)) is adenylation (A) domain 8. A disordered region spans residues 3257 to 3304 (SGKTDRRALGASQAPGTPPQHGAGPAAASTLDPAQAQAQDRADEEVGD). The Carrier 2 domain occupies 3304 to 3379 (DRTMATVTRV…QLVELVHSKV (76 aa)). The residue at position 3339 (Ser-3339) is an O-(pantetheine 4'-phosphoryl)serine. The tract at residues 3428–3680 (MTGAESFTGI…VDLVPVNYLT (253 aa)) is thioesterase (TE) domain.

In the C-terminal section; belongs to the NRP synthetase family.

It participates in secondary metabolite biosynthesis. In terms of biological role, hybrid PKS-NRPS synthetase; part of the gene cluster that mediates the biosynthesis of pyranoviolin A, a pyranonigrin analog with a C-3 methoxy group. Initially, the PKS portion of pyvA synthesizes C-10 carbon chain from 5 molecules of malonyl-CoA, which is then condensed with the thiolation (T) domain-bound glycine activated by the adenylation (A) domain. The subsequent chain release by Dieckmann condensation (DKC) could be catalyzed by the TE domain present at the C-terminus of pyvA and/or the alpha/beta hydrolase pyvD, installing the tetramic acid moiety. The FAD-dependent monooxygenase pyvC next epoxidizes one of the olefins of the polyketide part, and the epoxide ring-opening induces the dihydro-gamma-pyrone ring formation. The cytochrome P450 monooxygeanse pyvB would be responsible for the 2 consecutive reactions, in which the dihydro-gamma-pyrone is oxidized to gamma-pyrone and C-7 is hydroxylated to yield pyranonigrin F. Finally, the O-methyltransferase pyvH methylates the C-3 hydroxy group to complete the biosynthesis. This is Hybrid PKS-NRPS synthetase pyvA from Aspergillus violaceofuscus (strain CBS 115571).